The following is a 105-amino-acid chain: Thioredoxin (105 aa).

One can recognise a Thioredoxin domain in the interval 2 to 105; the sequence is VKQIESKYAF…KLEATINELI (104 aa). Residue Lys3 is modified to N6-acetyllysine. Lys8 carries the post-translational modification N6-succinyllysine. Catalysis depends on nucleophile residues Cys32 and Cys35. A disulfide bridge links Cys32 with Cys35. Position 39 is an N6-acetyllysine (Lys39). S-nitrosocysteine occurs at positions 62 and 69. Cys73 bears the S-nitrosocysteine; alternate mark. Residue Lys94 is modified to N6-acetyllysine; alternate. Lys94 is subject to N6-succinyllysine; alternate.

It belongs to the thioredoxin family. As to quaternary structure, homodimer; disulfide-linked. Interacts with TXNIP through the redox-active site. Interacts with MAP3K5 and CASP3. Interacts with APEX1; the interaction stimulates the FOS/JUN AP-1 DNA-binding activity in a redox-dependent manner. In terms of processing, in the fully reduced protein, both Cys-69 and Cys-73 are nitrosylated in response to nitric oxide (NO). When two disulfide bonds are present in the protein, only Cys-73 is nitrosylated. Cys-73 can serve as donor for nitrosylation of target proteins.

The protein resides in the nucleus. The protein localises to the cytoplasm. Its subcellular location is the secreted. Its function is as follows. Participates in various redox reactions through the reversible oxidation of its active center dithiol to a disulfide and catalyzes dithiol-disulfide exchange reactions. Plays a role in the reversible S-nitrosylation of cysteine residues in target proteins, and thereby contributes to the response to intracellular nitric oxide. Nitrosylates the active site Cys of CASP3 in response to nitric oxide (NO), and thereby inhibits caspase-3 activity. Induces the FOS/JUN AP-1 DNA binding activity in ionizing radiation (IR) cells through its oxidation/reduction status and stimulates AP-1 transcriptional activity. The sequence is that of Thioredoxin (TXN) from Bos taurus (Bovine).